A 488-amino-acid chain; its full sequence is ATP synthase subunit beta (488 aa).

164–171 (GGAGVGKT) provides a ligand contact to ATP.

The protein belongs to the ATPase alpha/beta chains family. In terms of assembly, F-type ATPases have 2 components, CF(1) - the catalytic core - and CF(0) - the membrane proton channel. CF(1) has five subunits: alpha(3), beta(3), gamma(1), delta(1), epsilon(1). CF(0) has four main subunits: a(1), b(1), b'(1) and c(9-12).

It localises to the cellular thylakoid membrane. It catalyses the reaction ATP + H2O + 4 H(+)(in) = ADP + phosphate + 5 H(+)(out). Functionally, produces ATP from ADP in the presence of a proton gradient across the membrane. The catalytic sites are hosted primarily by the beta subunits. This chain is ATP synthase subunit beta, found in Prochlorococcus marinus (strain SARG / CCMP1375 / SS120).